The following is a 170-amino-acid chain: 3-hydroxydecanoyl-[acyl-carrier-protein] dehydratase (170 aa).

The active site involves His69.

This sequence belongs to the thioester dehydratase family. FabA subfamily. Homodimer.

It is found in the cytoplasm. The enzyme catalyses a (3R)-hydroxyacyl-[ACP] = a (2E)-enoyl-[ACP] + H2O. It carries out the reaction (3R)-hydroxydecanoyl-[ACP] = (2E)-decenoyl-[ACP] + H2O. The catalysed reaction is (2E)-decenoyl-[ACP] = (3Z)-decenoyl-[ACP]. It functions in the pathway lipid metabolism; fatty acid biosynthesis. In terms of biological role, necessary for the introduction of cis unsaturation into fatty acids. Catalyzes the dehydration of (3R)-3-hydroxydecanoyl-ACP to E-(2)-decenoyl-ACP and then its isomerization to Z-(3)-decenoyl-ACP. Can catalyze the dehydratase reaction for beta-hydroxyacyl-ACPs with saturated chain lengths up to 16:0, being most active on intermediate chain length. The protein is 3-hydroxydecanoyl-[acyl-carrier-protein] dehydratase of Caulobacter vibrioides (strain ATCC 19089 / CIP 103742 / CB 15) (Caulobacter crescentus).